We begin with the raw amino-acid sequence, 687 residues long: Auxin response factor 14 (687 aa).

A DNA-binding region (TF-B3) is located at residues 133–235 (FCKTLTASDT…QLRLGVRRAV (103 aa)).

This sequence belongs to the ARF family. As to quaternary structure, homo and heterodimers. As to expression, expressed in roots, culms, leaves and young panicles.

The protein resides in the nucleus. Auxin response factors (ARFs) are transcriptional factors that bind specifically to the DNA sequence 5'-TGTCTC-3' found in the auxin-responsive promoter elements (AuxREs). The chain is Auxin response factor 14 (ARF14) from Oryza sativa subsp. japonica (Rice).